We begin with the raw amino-acid sequence, 163 residues long: Putative 4-hydroxy-4-methyl-2-oxoglutarate aldolase (163 aa).

Residues 79-82 and Arg101 contribute to the substrate site; that span reads GDQL. Residue Asp102 participates in a divalent metal cation binding.

It belongs to the class II aldolase/RraA-like family. In terms of assembly, homotrimer. It depends on a divalent metal cation as a cofactor.

It catalyses the reaction 4-hydroxy-4-methyl-2-oxoglutarate = 2 pyruvate. It carries out the reaction oxaloacetate + H(+) = pyruvate + CO2. In terms of biological role, catalyzes the aldol cleavage of 4-hydroxy-4-methyl-2-oxoglutarate (HMG) into 2 molecules of pyruvate. Also contains a secondary oxaloacetate (OAA) decarboxylase activity due to the common pyruvate enolate transition state formed following C-C bond cleavage in the retro-aldol and decarboxylation reactions. The sequence is that of Putative 4-hydroxy-4-methyl-2-oxoglutarate aldolase from Dechloromonas aromatica (strain RCB).